The chain runs to 6995 residues: Fibrous sheath-interacting protein 2 (6995 aa).

3 disordered regions span residues 273 to 292 (EQKIEEQRRKSREESDRKKQ), 308 to 336 (DTGLKDDIGRNGFDYRGQNGTTFESSSKK), and 351 to 476 (GDQK…TDAP). Over residues 359-396 (TSGQVSATVNQSQSSSKDVTKVSASSVTYPAEVQNSSS) the composition is skewed to polar residues. The span at 397-421 (EQKRSEVTKRLSDERGKNSTDDSAR) shows a compositional bias: basic and acidic residues. The segment covering 424–442 (IISTQLSPTRNAKLSQISL) has biased composition (polar residues). The residue at position 430 (Ser430) is a Phosphoserine. A compositionally biased stretch (basic and acidic residues) spans 443–452 (DHQKEEKEMK). Positions 453-463 (STWNGGLSKKS) are enriched in polar residues. A coiled-coil region spans residues 665 to 692 (LEISLLYDKKAKAMDQIKNLKNVFVNFK). 9 disordered regions span residues 1452-1472 (PDPQPSCSHQNTETIDKDPPT), 2554-2595 (KSKR…VPQM), 2699-2731 (TKTKIKNKLSAGEKTPRESRSKTALGLPQTPQV), 3182-3270 (PVKM…PNFT), 5489-5665 (GPSA…KYKG), 5719-5740 (SKSSVKTDDRPMSKDKETMTEK), 5823-5878 (KDLS…SKSK), 5943-5996 (KEDE…PDKL), and 6973-6995 (SKVFSRSSGSIPKSSSPPHQDKR). Positions 2555 to 2565 (SKREGEMHDSS) are enriched in basic and acidic residues. A compositionally biased stretch (polar residues) spans 3187–3204 (PSNTSDTPRTRRSSQGSV). Residues 3220-3231 (SVTSNSSSHISS) are compositionally biased toward low complexity. Positions 3232–3250 (CVENTNKSLEPMGRSNSEA) are enriched in polar residues. Positions 3255-3265 (SRHKAHDHGQR) are enriched in basic residues. A compositionally biased stretch (basic and acidic residues) spans 5496–5509 (DAKKEDESKVKPAT). 3 stretches are compositionally biased toward polar residues: residues 5523–5557 (MKSQGSQVQQLATSPPTSMKSQRIQVQQSVMSPPT), 5565–5625 (QVQQ…QSAM), and 5638–5650 (VQESSTSPPTTMK). 2 stretches are compositionally biased toward basic and acidic residues: residues 5719 to 5738 (SKSSVKTDDRPMSKDKETMT) and 5829 to 5877 (GHRD…ESKS). The segment covering 5982-5993 (SDVQKTPEQSSP) has biased composition (polar residues). Low complexity predominate over residues 6977 to 6995 (SRSSGSIPKSSSPPHQDKR).

In terms of assembly, may interact with AKAP4. As to expression, predominantly expressed in testis.

Plays a role in spermatogenesis. This Mus musculus (Mouse) protein is Fibrous sheath-interacting protein 2 (Fsip2).